A 216-amino-acid polypeptide reads, in one-letter code: Small ribosomal subunit protein uS3c (216 aa).

A KH type-2 domain is found at 43–118 (IKNYIQKNRR…RLKIAITRVE (76 aa)).

This sequence belongs to the universal ribosomal protein uS3 family. In terms of assembly, part of the 30S ribosomal subunit.

It localises to the plastid. The protein localises to the chloroplast. The polypeptide is Small ribosomal subunit protein uS3c (rps3) (Dioscorea elephantipes (Elephant's foot yam)).